The primary structure comprises 412 residues: Multifunctional CCA protein (412 aa).

Residues glycine 8 and arginine 11 each contribute to the ATP site. Residues glycine 8 and arginine 11 each coordinate CTP. 2 residues coordinate Mg(2+): aspartate 21 and aspartate 23. 3 residues coordinate ATP: arginine 91, arginine 137, and arginine 140. The CTP site is built by arginine 91, arginine 137, and arginine 140. The region spanning 228–329 (TGIHTMMVLE…VKLFDKADFW (102 aa)) is the HD domain.

It belongs to the tRNA nucleotidyltransferase/poly(A) polymerase family. Bacterial CCA-adding enzyme type 1 subfamily. As to quaternary structure, monomer. Can also form homodimers and oligomers. Mg(2+) serves as cofactor. The cofactor is Ni(2+).

It carries out the reaction a tRNA precursor + 2 CTP + ATP = a tRNA with a 3' CCA end + 3 diphosphate. The catalysed reaction is a tRNA with a 3' CCA end + 2 CTP + ATP = a tRNA with a 3' CCACCA end + 3 diphosphate. Functionally, catalyzes the addition and repair of the essential 3'-terminal CCA sequence in tRNAs without using a nucleic acid template. Adds these three nucleotides in the order of C, C, and A to the tRNA nucleotide-73, using CTP and ATP as substrates and producing inorganic pyrophosphate. tRNA 3'-terminal CCA addition is required both for tRNA processing and repair. Also involved in tRNA surveillance by mediating tandem CCA addition to generate a CCACCA at the 3' terminus of unstable tRNAs. While stable tRNAs receive only 3'-terminal CCA, unstable tRNAs are marked with CCACCA and rapidly degraded. The protein is Multifunctional CCA protein of Shewanella pealeana (strain ATCC 700345 / ANG-SQ1).